Here is a 425-residue protein sequence, read N- to C-terminus: Glutamyl-tRNA reductase (425 aa).

Residues 49–52 (TCNR), serine 107, 112–114 (EPQ), and glutamine 118 each bind substrate. Cysteine 50 (nucleophile) is an active-site residue. 187–192 (GAGETI) contacts NADP(+).

Belongs to the glutamyl-tRNA reductase family. In terms of assembly, homodimer.

It catalyses the reaction (S)-4-amino-5-oxopentanoate + tRNA(Glu) + NADP(+) = L-glutamyl-tRNA(Glu) + NADPH + H(+). Its pathway is porphyrin-containing compound metabolism; protoporphyrin-IX biosynthesis; 5-aminolevulinate from L-glutamyl-tRNA(Glu): step 1/2. Functionally, catalyzes the NADPH-dependent reduction of glutamyl-tRNA(Glu) to glutamate 1-semialdehyde (GSA). The sequence is that of Glutamyl-tRNA reductase from Pseudomonas syringae pv. tomato (strain ATCC BAA-871 / DC3000).